An 89-amino-acid chain; its full sequence is Protein WFDC9 (89 aa).

The signal sequence occupies residues 1 to 23 (MKPWILLLVMFISGVVMLLPVLG).

Its subcellular location is the secreted. This is Protein WFDC9 (WFDC9) from Homo sapiens (Human).